The primary structure comprises 477 residues: Calcium uptake protein 1, mitochondrial (477 aa).

A mitochondrion-targeting transit peptide spans 1–33 (MFRLNALSALAELAVGSRWYHGTSQPTQTKRRL). Positions 55 to 108 (AHAESPPSVNSKKTDAGDKGKSKDTREVSSHEGSAADTAAEPYPEEKKKKRSGF) are disordered. Residues 66–84 (KKTDAGDKGKSKDTREVSS) are compositionally biased toward basic and acidic residues. Residues 101–112 (KKKKRSGFRDRK) are polybasic region. Ser124 bears the Phosphoserine mark. Residues 128–131 (KIFR) are k/R-ring. Residues 220-255 (TPQRNFEIAFKMFDLNGDGEVDMEEFEQVQSIIRSQ) enclose the EF-hand 1 domain. Residues Asp233, Asn235, Asp237, Glu239, and Glu244 each contribute to the Ca(2+) site. The k/R-ring stretch occupies residues 261 to 265 (RHRDR). The EF-hand 2; degenerate domain occupies 356-376 (KDGKGLTFQEVENFFTFLKNI). The 36-residue stretch at 410 to 445 (LSDHVCDVVFALFDCDGNGELSNKEFVSIMKQRLMR) folds into the EF-hand 3 domain. Ca(2+) is bound by residues Asp423, Asp425, Asn427, Glu429, and Glu434. The residue at position 457 (Arg457) is an Asymmetric dimethylarginine. The C-helix region stretch occupies residues 457 to 467 (RLMQAMWKCAQ).

It belongs to the MICU1 family. MICU1 subfamily. In terms of assembly, heterodimer; disulfide-linked; heterodimerizes with MICU2 or MICU3. Homodimer; disulfide-linked. Component of the uniplex complex, composed of MCU, EMRE/SMDT1, MICU1 and MICU2 (or MICU3) in a 4:4:1:1 stoichiometry. The composition of calcium sensors within the uniplex complex can differ depending on tissues: a MICU1 homodimer can be present instead of the MICU1-MICU2 heterodimer in skeletal-muscle and kidney. MICU1 is recruited to the uniplex complex by EMRE/SMDT1, and it associates with MCU at low calcium levels, occluding the pore of the MCU channel. Associates with the MICOS complex. Interacts with SLC25A23. Interacts with CHCHD4/MIA40; which introduces the interchain disulfide bond with MICU2. Interacts (when methylated) with UCP2; leading to decrease the calcium sensitivity of MICU1. Phosphorylation at Ser-124 by AKT1 impairs its maturation and stability. Post-translationally, asymmetric dimethylation at Arg-457 by PRMT1 decreases the calcium sensitivity of MICU1 by promoting interaction with UCP2. In terms of processing, degraded by YME1L1 when not complexed as homodimer or heterodimer. Not degraded when complexed as homodimer or heterodimer; the presence of the interchain disulfide bond protecting MICU1 from degradation by YME1L1.

Its subcellular location is the mitochondrion intermembrane space. The protein resides in the mitochondrion inner membrane. Functionally, calcium sensor of the mitochondrial calcium uniporter (MCU) channel, which senses calcium level via its EF-hand domains. MICU1 and MICU2 (or MICU3) form a disulfide-linked heterodimer that stimulates and inhibits MCU activity, depending on the concentration of calcium. At low calcium levels, MICU1 occludes the pore of the MCU channel, preventing mitochondrial calcium uptake. At higher calcium levels, calcium-binding to MICU1 and MICU2 (or MICU3) induces a conformational change that weakens MCU-MICU1 interactions and moves the MICU1-MICU2 heterodimer away from the pore, allowing calcium permeation through the MCU channel. Also required to protect against manganese toxicity by preventing manganese uptake by MCU: mechanistically, manganese-binding to its EF-hand domains does not induce any conformational change, maintaining MCU pore occlusion. Acts as a regulator of mitochondrial cristae structure independently of its ability to regulate the mitochondrial calcium uniporter channel. Regulates glucose-dependent insulin secretion in pancreatic beta-cells by regulating mitochondrial calcium uptake. Induces T-helper 1-mediated autoreactivity, which is accompanied by the release of IFNG. In Rattus norvegicus (Rat), this protein is Calcium uptake protein 1, mitochondrial (Micu1).